The chain runs to 270 residues: Tetracenomycin polyketide synthesis O-methyltransferase TcmP (270 aa).

The protein operates within antibiotic biosynthesis; tetracenomycin C biosynthesis. O-methyltransferase that catalyzes the methylation of the C-9 carboxy group of tetracenomycin E (TCM E) to yield TCM A2. Catalyzes as well the following side reactions: methylation of 8-O-methyl-TCM D3 to 9-carboxymethyl-8-O-methyl-TCM D3; and of TCM B3 to 9-carboxymethyl-TCM B3. This chain is Tetracenomycin polyketide synthesis O-methyltransferase TcmP (tcmP), found in Streptomyces glaucescens.